A 691-amino-acid polypeptide reads, in one-letter code: Glycine--tRNA ligase beta subunit (691 aa).

The protein belongs to the class-II aminoacyl-tRNA synthetase family. As to quaternary structure, tetramer of two alpha and two beta subunits.

Its subcellular location is the cytoplasm. It catalyses the reaction tRNA(Gly) + glycine + ATP = glycyl-tRNA(Gly) + AMP + diphosphate. The chain is Glycine--tRNA ligase beta subunit from Limosilactobacillus reuteri (strain DSM 20016) (Lactobacillus reuteri).